Reading from the N-terminus, the 44-residue chain is Conotoxin Sr5.5 (44 aa).

The N-terminal stretch at 1-19 (MRCLPVFVILLLLIASAPS) is a signal peptide. The propeptide occupies 20–29 (VDDNAKGTQH).

The protein belongs to the conotoxin T superfamily. In terms of processing, contains 2 disulfide bonds that can be either 'C1-C3, C2-C4' or 'C1-C4, C2-C3', since these disulfide connectivities have been observed for conotoxins with cysteine framework V (for examples, see AC P0DQQ7 and AC P81755). As to expression, expressed by the venom duct.

The protein resides in the secreted. In Conus spurius (Alphabet cone), this protein is Conotoxin Sr5.5.